A 607-amino-acid chain; its full sequence is Thymidine kinase (607 aa).

Disordered regions lie at residues 1–160 (MAGF…ADST) and 180–215 (DDKSDCESEDESNFRRPSSHSALKQKNGGKGKPSGL). The span at 17–32 (KCQEDESPENERHENF) shows a compositional bias: basic and acidic residues. 3 stretches are compositionally biased toward polar residues: residues 88–106 (AAVTSNTGNSPGSRHTSCP), 148–160 (RKTSCTEGGADST), and 194–203 (RRPSSHSALK). Position 291 to 298 (291 to 298 (GAPGVGKT)) interacts with ATP. E317 functions as the Proton acceptor in the catalytic mechanism. Q355 serves as a coordination point for substrate. Position 445 (R445) interacts with ATP. Substrate is bound at residue R451.

It belongs to the herpesviridae thymidine kinase family. In terms of assembly, homodimer.

The protein localises to the virion tegument. It localises to the host nucleus. It carries out the reaction thymidine + ATP = dTMP + ADP + H(+). Catalyzes the transfer of the gamma-phospho group of ATP to thymidine to generate dTMP in the salvage pathway of pyrimidine synthesis. The dTMP serves as a substrate for DNA polymerase during viral DNA replication. Allows the virus to be reactivated and to grow in non-proliferative cells lacking a high concentration of phosphorylated nucleic acid precursors. The protein is Thymidine kinase of Epstein-Barr virus (strain AG876) (HHV-4).